The sequence spans 251 residues: Hydroxyacylglutathione hydrolase (251 aa).

Residues His-53, His-55, Asp-57, His-58, His-110, Asp-127, and His-165 each contribute to the Zn(2+) site.

Belongs to the metallo-beta-lactamase superfamily. Glyoxalase II family. Monomer. Zn(2+) is required as a cofactor.

It catalyses the reaction an S-(2-hydroxyacyl)glutathione + H2O = a 2-hydroxy carboxylate + glutathione + H(+). It functions in the pathway secondary metabolite metabolism; methylglyoxal degradation; (R)-lactate from methylglyoxal: step 2/2. Its function is as follows. Thiolesterase that catalyzes the hydrolysis of S-D-lactoyl-glutathione to form glutathione and D-lactic acid. The chain is Hydroxyacylglutathione hydrolase from Erwinia tasmaniensis (strain DSM 17950 / CFBP 7177 / CIP 109463 / NCPPB 4357 / Et1/99).